A 1138-amino-acid chain; its full sequence is Envelopment polyprotein (1138 aa).

A signal peptide spans 1-18 (MEGWYLVVLGVCYTLTLA). The Lumenal portion of the chain corresponds to 19-487 (MPKTIYELKM…CVPGLHGWAT (469 aa)). 11 disulfides stabilise this stretch: Cys-30-Cys-155, Cys-64-Cys-161, Cys-113-Cys-132, Cys-137-Cys-142, Cys-179-Cys-189, Cys-214-Cys-250, Cys-239-Cys-354, Cys-379-Cys-438, Cys-383-Cys-392, Cys-408-Cys-427, and Cys-455-Cys-478. An N-linked (GlcNAc...) asparagine; by host glycan is attached at Asn-138. An N-linked (GlcNAc...) asparagine; by host glycan is attached at Asn-350. Residue Asn-402 is glycosylated (N-linked (GlcNAc...) asparagine; by host). Residues 488–508 (VMLLSTFCFGWVLIPAVTLII) traverse the membrane as a helical segment. Residues 509-630 (LKCLRVLTFS…LGVFRYKSRC (122 aa)) lie on the Cytoplasmic side of the membrane. The tract at residues 519 to 536 (CSHYTNESKFKFILEKVK) is binding to the ribonucleoprotein. 2 CCHC-type zinc fingers span residues 548–568 (CDVC…RQSC) and 573–594 (CPYC…YSIC). Binding to the ribonucleoprotein regions lie at residues 591 to 608 (YSIC…KKSL), 595 to 606 (KLTGRFQEALKK), and 614 to 628 (KKGC…RYKS). The interval 610–637 (KPEVKKGCYRTLGVFRYKSRCYVGLVWC) is interaction with host TRAF3. The 24-residue stretch at 614 to 637 (KKGCYRTLGVFRYKSRCYVGLVWC) folds into the ITAM domain. Phosphotyrosine occurs at positions 618 and 631. Residues 618–621 (YRTL) carry the YxxL motif. Residues 631–651 (YVGLVWCLLLTCEIVIWAASA) form a helical membrane-spanning segment. Residues 652–1107 (ETPLMESGWS…EWLLGILNGN (456 aa)) lie on the Lumenal side of the membrane. 8 disulfides stabilise this stretch: Cys-738/Cys-773, Cys-742/Cys-780, Cys-754/Cys-887, Cys-768/Cys-898, Cys-783/Cys-906, Cys-809/Cys-818, Cys-826/Cys-835, and Cys-866/Cys-870. The tract at residues 760–780 (YQYETGWGCNPGDCPGVGTGC) is fusion loop. N-linked (GlcNAc...) asparagine; by host glycosylation is present at Asn-930. 5 cysteine pairs are disulfide-bonded: Cys-972–Cys-1002, Cys-995–Cys-1047, Cys-1012–Cys-1017, Cys-1048–Cys-1053, and Cys-1087–Cys-1091. The chain crosses the membrane as a helical span at residues 1108–1128 (WIVVVVLVVILILSIIMFSVL). Positions 1124–1138 (MFSVLCPRRGHKKTV) are binding to the ribonucleoprotein. Topologically, residues 1129-1138 (CPRRGHKKTV) are cytoplasmic.

It belongs to the hantavirus envelope glycoprotein family. Homodimer. Homotetramer; forms heterotetrameric Gn-Gc spikes in the pre-fusion conformation. Interacts (via C-terminus) with the nucleoprotein. Interacts with host TUFM; this interaction contributes to the virus-induced degradation of mitochondria by autophagy, which leads to degradation of host MAVS and inhibition of type I interferon (IFN) responses. Interacts with host MAP1LC3B; this interaction contributes to the virus-induced degradation of mitochondria by autophagy, which leads to degradation of host MAVS and inhibition of type I interferon (IFN) responses. Interacts (via C-terminus) with host TRAF3; this interaction inhibits the formation of TRAF3-TBK1 complexes. As to quaternary structure, homodimer. Homotetramer; forms heterotetrameric Gn-Gc spikes in the pre-fusion conformation. Homotrimer; forms homotrimer in the post-fusion conformation at acidic pH. Interacts (via C-terminus) with the nucleoprotein. Envelope polyprotein precursor is quickly cleaved in vivo just after synthesis, presumably by host signal peptidase.

It localises to the virion membrane. The protein resides in the host cell surface. Its subcellular location is the host Golgi apparatus membrane. The protein localises to the host endoplasmic reticulum membrane. It is found in the host mitochondrion. Forms homotetramers with glycoprotein C at the surface of the virion. Attaches the virion to host cell receptors including integrin ITGAV/ITGB3. This attachment induces virion internalization possibly through clathrin-dependent endocytosis and dynamin-independent macropinocytosis. Mediates the assembly and budding of infectious virus particles through its interaction with the nucleocapsid protein and the viral genome. May dysregulate normal immune and endothelial cell responses through an ITAM motif. Translocates to mitochondria, binds to host TUFM and recruits MAP1LC3B. These interactions induce mitochondrial autophagy and therefore destruction of host MAVS leading to inhibition of type I interferon (IFN) responses. Concomitant breakdown of glycoprotein N is apparently prevented by the nucleoprotein that may inhibit Gn-stimulated autophagosome-lysosome fusion. Interacts with the viral genomic RNA. Inhibits the host RIG-I/TBK1 pathway by disrupting the formation of TBK1-TRAF3 complexes and downstream signaling responses required for IFN-beta transcription. In terms of biological role, forms homotetramers with glycoprotein N at the surface of the virion. Attaches the virion to host cell receptors including integrin ITGAV/ITGB3. This attachment induces virion internalization predominantly through clathrin-dependent endocytosis. Class II fusion protein that promotes fusion of viral membrane with host endosomal membrane after endocytosis of the virion. This is Envelopment polyprotein (GP) from Abrothrix longipilis (Long-haired grass mouse).